The following is a 77-amino-acid chain: Putative sulfur carrier protein AF_0188 (77 aa).

The active-site Cysteine persulfide intermediate is cysteine 11.

This sequence belongs to the sulfur carrier protein TusA family.

The chain is Putative sulfur carrier protein AF_0188 from Archaeoglobus fulgidus (strain ATCC 49558 / DSM 4304 / JCM 9628 / NBRC 100126 / VC-16).